The primary structure comprises 172 residues: Ribosome maturation factor RimM (172 aa).

Residues Asp-96–Leu-168 form the PRC barrel domain.

Belongs to the RimM family. In terms of assembly, binds ribosomal protein uS19.

It is found in the cytoplasm. Functionally, an accessory protein needed during the final step in the assembly of 30S ribosomal subunit, possibly for assembly of the head region. Essential for efficient processing of 16S rRNA. May be needed both before and after RbfA during the maturation of 16S rRNA. It has affinity for free ribosomal 30S subunits but not for 70S ribosomes. This Streptococcus mutans serotype c (strain ATCC 700610 / UA159) protein is Ribosome maturation factor RimM.